A 396-amino-acid chain; its full sequence is Elongation factor Tu 1 (396 aa).

Residues 10–206 enclose the tr-type G domain; it reads KLHVNVGTIG…ALDTFIPDPT (197 aa). Residues 19 to 26 are G1; that stretch reads GHVDHGKT. 19–26 is a binding site for GTP; it reads GHVDHGKT. Threonine 26 is a Mg(2+) binding site. The G2 stretch occupies residues 60–64; that stretch reads GITIS. A G3 region spans residues 81–84; it reads DCPG. GTP contacts are provided by residues 81 to 85 and 136 to 139; these read DCPGH and NKAD. Residues 136–139 are G4; the sequence is NKAD. Residues 174-176 are G5; it reads SAR.

This sequence belongs to the TRAFAC class translation factor GTPase superfamily. Classic translation factor GTPase family. EF-Tu/EF-1A subfamily. In terms of assembly, monomer.

It localises to the cytoplasm. It catalyses the reaction GTP + H2O = GDP + phosphate + H(+). In terms of biological role, GTP hydrolase that promotes the GTP-dependent binding of aminoacyl-tRNA to the A-site of ribosomes during protein biosynthesis. The polypeptide is Elongation factor Tu 1 (Xanthomonas campestris pv. campestris (strain B100)).